Here is a 315-residue protein sequence, read N- to C-terminus: Putative HTH-type transcriptional regulatory protein PH1808 (315 aa).

Residues 131–189 form the HTH cro/C1-type domain; the sequence is LKALREEHGYSITELAGILGISRKSLQRYEKGESVVSLEVALRLEEVFDEPLVKPIDVL. Residues 142–161 constitute a DNA-binding region (H-T-H motif); that stretch reads ITELAGILGISRKSLQRYEK.

This Pyrococcus horikoshii (strain ATCC 700860 / DSM 12428 / JCM 9974 / NBRC 100139 / OT-3) protein is Putative HTH-type transcriptional regulatory protein PH1808.